The primary structure comprises 253 residues: Probable U3 small nucleolar RNA-associated protein 11 (253 aa).

Residues 1–21 (MAAAFRKAVKSRQREYRERSQ) form a disordered region. Glycyl lysine isopeptide (Lys-Gly) (interchain with G-Cter in SUMO2) cross-links involve residues Lys-74, Lys-83, and Lys-86. Thr-90 is subject to Phosphothreonine. Residues Lys-103, Lys-120, Lys-143, Lys-144, Lys-180, Lys-211, Lys-218, Lys-235, and Lys-236 each participate in a glycyl lysine isopeptide (Lys-Gly) (interchain with G-Cter in SUMO2) cross-link. Ser-241 is subject to Phosphoserine. Lys-246 participates in a covalent cross-link: Glycyl lysine isopeptide (Lys-Gly) (interchain with G-Cter in SUMO2).

Belongs to the UTP11 family. In terms of assembly, part of the small subunit (SSU) processome, composed of more than 70 proteins and the RNA chaperone small nucleolar RNA (snoRNA) U3.

It localises to the nucleus. The protein resides in the nucleolus. Part of the small subunit (SSU) processome, first precursor of the small eukaryotic ribosomal subunit. During the assembly of the SSU processome in the nucleolus, many ribosome biogenesis factors, an RNA chaperone and ribosomal proteins associate with the nascent pre-rRNA and work in concert to generate RNA folding, modifications, rearrangements and cleavage as well as targeted degradation of pre-ribosomal RNA by the RNA exosome. Involved in nucleolar processing of pre-18S ribosomal RNA. This is Probable U3 small nucleolar RNA-associated protein 11 from Rattus norvegicus (Rat).